The following is a 537-amino-acid chain: Tyrosine-protein kinase Fyn (537 aa).

G2 carries the N-myristoyl glycine lipid modification. Residues C3 and C6 are each lipidated (S-palmitoyl cysteine). The residue at position 12 (T12) is a Phosphothreonine; by PKC. The interval 14-35 (LTEERDGSLNQSSGYRYGTDPT) is disordered. Residues S21 and S26 each carry the phosphoserine modification. The 62-residue stretch at 82–143 (TGVTLFVALY…PSNYVAPVDS (62 aa)) folds into the SH3 domain. The region spanning 149–246 (WYFGKLGRKD…GLCCRLVVPC (98 aa)) is the SH2 domain. The residue at position 185 (Y185) is a Phosphotyrosine. In terms of domain architecture, Protein kinase spans 271 to 524 (LQLIKRLGNG…YLQGFLEDYF (254 aa)). ATP is bound by residues 277-285 (LGNGQFGEV) and K299. The Proton acceptor role is filled by D390. Position 420 is a phosphotyrosine; by autocatalysis (Y420). Residue Y531 is modified to Phosphotyrosine; by CSK.

The protein belongs to the protein kinase superfamily. Tyr protein kinase family. SRC subfamily. As to quaternary structure, interacts (via its SH3 domain) with PIK3R1 and PRMT8. Interacts with FYB1, PAG1, and SH2D1A. Interacts with CD79A (tyrosine-phosphorylated form); the interaction increases FYN activity. Interacts (via SH2 domain) with CSF1R (tyrosine phosphorylated). Interacts with TOM1L1 (phosphorylated form). Interacts with KDR (tyrosine phosphorylated). Interacts (via SH3 domain) with KLHL2 (via N-terminus). Interacts with SH2D1A and SLAMF1. Interacts with ITCH; the interaction phosphorylates ITCH and negatively regulates its activity. Interacts with FASLG. Interacts with RUNX3. Interacts with KIT. Interacts with EPHA8; possible downstream effector of EPHA8 in regulation of cell adhesion. Interacts with PTK2/FAK1; this interaction leads to PTK2/FAK1 phosphorylation and activation. Interacts with CAV1; this interaction couples integrins to the Ras-ERK pathway. Interacts with UNC119. Interacts (via SH2 domain) with PTPRH (phosphorylated form). Interacts with PTPRO (phosphorylated form). Interacts with PTPRB (phosphorylated form). Interacts with FYB2. Interacts with DSCAM. Interacts with SKAP1 and FYB1; this interaction promotes the phosphorylation of CLNK. Interacts with NEDD9; in the presence of PTK2. The cofactor is Mn(2+). Autophosphorylated at Tyr-420. Phosphorylation on the C-terminal tail at Tyr-531 by CSK maintains the enzyme in an inactive state. PTPRC/CD45 dephosphorylates Tyr-531 leading to activation. Ultraviolet B (UVB) strongly increase phosphorylation at Thr-12 and kinase activity, and promotes translocation from the cytoplasm to the nucleus. Dephosphorylation at Tyr-420 by PTPN2 negatively regulates T-cell receptor signaling. Phosphorylated at tyrosine residues, which can be enhanced by NTN1. Post-translationally, palmitoylated. Palmitoylation at Cys-3 and Cys-6, probably by ZDHHC21, regulates subcellular location.

The protein localises to the cytoplasm. It localises to the nucleus. Its subcellular location is the cell membrane. The protein resides in the perikaryon. The catalysed reaction is L-tyrosyl-[protein] + ATP = O-phospho-L-tyrosyl-[protein] + ADP + H(+). With respect to regulation, inhibited by phosphorylation of Tyr-531 by leukocyte common antigen and activated by dephosphorylation of this site. In terms of biological role, non-receptor tyrosine-protein kinase that plays a role in many biological processes including regulation of cell growth and survival, cell adhesion, integrin-mediated signaling, cytoskeletal remodeling, cell motility, immune response and axon guidance. Inactive FYN is phosphorylated on its C-terminal tail within the catalytic domain. Following activation by PKA, the protein subsequently associates with PTK2/FAK1, allowing PTK2/FAK1 phosphorylation, activation and targeting to focal adhesions. Involved in the regulation of cell adhesion and motility through phosphorylation of CTNNB1 (beta-catenin) and CTNND1 (delta-catenin). Regulates cytoskeletal remodeling by phosphorylating several proteins including the actin regulator WAS and the microtubule-associated proteins MAP2 and MAPT. Promotes cell survival by phosphorylating AGAP2/PIKE-A and preventing its apoptotic cleavage. Participates in signal transduction pathways that regulate the integrity of the glomerular slit diaphragm (an essential part of the glomerular filter of the kidney) by phosphorylating several slit diaphragm components including NPHS1, KIRREL1 and TRPC6. Plays a role in neural processes by phosphorylating DPYSL2, a multifunctional adapter protein within the central nervous system, ARHGAP32, a regulator for Rho family GTPases implicated in various neural functions, and SNCA, a small pre-synaptic protein. Involved in reelin signaling by mediating phosphorylation of DAB1 following reelin (RELN)-binding to its receptor. Participates in the downstream signaling pathways that lead to T-cell differentiation and proliferation following T-cell receptor (TCR) stimulation. Phosphorylates PTK2B/PYK2 in response to T-cell receptor activation. Also participates in negative feedback regulation of TCR signaling through phosphorylation of PAG1, thereby promoting interaction between PAG1 and CSK and recruitment of CSK to lipid rafts. CSK maintains LCK and FYN in an inactive form. Promotes CD28-induced phosphorylation of VAV1. In mast cells, phosphorylates CLNK after activation of immunoglobulin epsilon receptor signaling. Can also promote CD244-mediated NK cell activation. The sequence is that of Tyrosine-protein kinase Fyn from Bos taurus (Bovine).